We begin with the raw amino-acid sequence, 259 residues long: Probable ABC transporter permease protein RF_0080 (259 aa).

The next 5 helical transmembrane spans lie at 13–35 (TIKFAQSVGSFSLFSFAAVSSII), 49–69 (LFIGFHSLPVVAMTTFFSGAV), 148–168 (VIAAIITMPCLVLIGDIIGVM), 195–215 (PIDVISGLVKAGVFGFIISII), and 237–257 (AVVNSSILILISNYLITELFF).

This sequence belongs to the MlaE permease family.

It is found in the cell inner membrane. Functionally, could be part of an ABC transporter complex. This is Probable ABC transporter permease protein RF_0080 from Rickettsia felis (strain ATCC VR-1525 / URRWXCal2) (Rickettsia azadi).